The primary structure comprises 258 residues: Alcohol dehydrogenase 2 (258 aa).

9 to 33 serves as a coordination point for NAD(+); sequence IFVGGLGFIGYEACKQLMAKNMASF. Position 137 (serine 137) interacts with substrate. Catalysis depends on tyrosine 150, which acts as the Proton acceptor.

The protein belongs to the short-chain dehydrogenases/reductases (SDR) family. As to quaternary structure, homodimer.

The enzyme catalyses a primary alcohol + NAD(+) = an aldehyde + NADH + H(+). It carries out the reaction a secondary alcohol + NAD(+) = a ketone + NADH + H(+). This Ceratitis cosyra (Mango fruit fly) protein is Alcohol dehydrogenase 2 (ADH2).